Here is a 473-residue protein sequence, read N- to C-terminus: MMTKVLGMAPVLGPRPPQEQVGPLMVKVEEKEEKGKYLPSLEMFRQRFRQFGYHDTPGPREALSQLRVLCCEWLRPEIHTKEQILELLVLEQFLTILPQELQAWVQEHCPESAEEAVTLLEDLERELDEPGHQVSTPPNEQKPVWEKISSSGTAKESPSSMQPQPLETSHNYESWGPLYIQESGEEQEFAQDPRKVRDCRLSTQHEESADEQKGSEAEGLKEDIISVIIANKPEASLERQCVNLENEKGTKPPLQEAGSKKGRESVPTKPTPGERRYICAECGKAFSNSSNLTKHRRTHTGEKPYVCTKCGKAFSHSSNLTLHYRTHLVDRPYDCKCGKAFGQSSDLLKHQRMHTEEAPYQCKDCGKAFSGKGSLIRHYRIHTGEKPYQCNECGKSFSQHAGLSSHQRLHTGEKPYKCKECGKAFNHSSNFNKHHRIHTGEKPYWCHHCGKTFCSKSNLSKHQRVHTGEGEAP.

Lysine 27 is covalently cross-linked (Glycyl lysine isopeptide (Lys-Gly) (interchain with G-Cter in SUMO2)). The SCAN box domain maps to 45–127; sequence RQRFRQFGYH…TLLEDLEREL (83 aa). A disordered region spans residues 127 to 171; the sequence is LDEPGHQVSTPPNEQKPVWEKISSSGTAKESPSSMQPQPLETSHN. A compositionally biased stretch (polar residues) spans 148–171; the sequence is ISSSGTAKESPSSMQPQPLETSHN. Residues lysine 221 and lysine 232 each participate in a glycyl lysine isopeptide (Lys-Gly) (interchain with G-Cter in SUMO2) cross-link. The interval 244 to 272 is disordered; sequence LENEKGTKPPLQEAGSKKGRESVPTKPTP. A compositionally biased stretch (basic and acidic residues) spans 258–272; that stretch reads GSKKGRESVPTKPTP. 7 consecutive C2H2-type zinc fingers follow at residues 277–299, 305–327, 333–354, 360–382, 388–410, 416–438, and 444–466; these read YICAECGKAFSNSSNLTKHRRTH, YVCTKCGKAFSHSSNLTLHYRTH, YDCKCGKAFGQSSDLLKHQRMH, YQCKDCGKAFSGKGSLIRHYRIH, YQCNECGKSFSQHAGLSSHQRLH, YKCKECGKAFNHSSNFNKHHRIH, and YWCHHCGKTFCSKSNLSKHQRVH. Residue lysine 349 forms a Glycyl lysine isopeptide (Lys-Gly) (interchain with G-Cter in SUMO2) linkage.

The protein belongs to the krueppel C2H2-type zinc-finger protein family.

It localises to the nucleus. Functionally, strong transcriptional activator. Plays an important role in spermatogenesis; essential for the progression of meiotic prophase I in spermatocytes. This is Zinc finger and SCAN domain-containing protein 21 (ZSCAN21) from Gorilla gorilla gorilla (Western lowland gorilla).